A 206-amino-acid chain; its full sequence is Fibroblast growth factor 4 (206 aa).

The first 30 residues, methionine 1–alanine 30, serve as a signal peptide directing secretion.

The protein belongs to the heparin-binding growth factors family. Interacts with FGFR1, FGFR2, FGFR3 and FGFR4. Affinity between fibroblast growth factors (FGFs) and their receptors is increased by heparan sulfate glycosaminoglycans that function as coreceptors.

It is found in the secreted. Functionally, plays an important role in the regulation of embryonic development, cell proliferation, and cell differentiation. Required for normal limb and cardiac valve development during embryogenesis. May play a role in embryonic molar tooth bud development via inducing the expression of MSX1, MSX2 and MSX1-mediated expression of SDC1 in dental mesenchyme cells. This chain is Fibroblast growth factor 4, found in Homo sapiens (Human).